The chain runs to 125 residues: Fluoride-specific ion channel FluC (125 aa).

4 helical membrane passes run 5-25 (LLVA…GALV), 29-49 (LGAG…FLIG), 66-86 (LFLA…SYET), and 95-115 (VGKA…LAFL). Residues Gly74 and Thr77 each contribute to the Na(+) site.

Belongs to the fluoride channel Fluc/FEX (TC 1.A.43) family.

It is found in the cell inner membrane. It carries out the reaction fluoride(in) = fluoride(out). Its activity is regulated as follows. Na(+) is not transported, but it plays an essential structural role and its presence is essential for fluoride channel function. In terms of biological role, fluoride-specific ion channel. Important for reducing fluoride concentration in the cell, thus reducing its toxicity. The polypeptide is Fluoride-specific ion channel FluC (Thermus thermophilus (strain ATCC 27634 / DSM 579 / HB8)).